The sequence spans 262 residues: Ornithine carbamoyltransferase (262 aa).

Carbamoyl phosphate-binding positions include 3–7 (STRTR), Gln30, Arg54, and 81–84 (HPTQ). Residues Asn114, Asp178, and 182–183 (SM) each bind L-ornithine. Carbamoyl phosphate-binding positions include 219–222 (HCLP) and Thr247.

It belongs to the aspartate/ornithine carbamoyltransferase superfamily. OTCase family.

The protein localises to the cytoplasm. It catalyses the reaction carbamoyl phosphate + L-ornithine = L-citrulline + phosphate + H(+). It functions in the pathway amino-acid biosynthesis; L-arginine biosynthesis; L-arginine from L-ornithine and carbamoyl phosphate: step 1/3. Reversibly catalyzes the transfer of the carbamoyl group from carbamoyl phosphate (CP) to the N(epsilon) atom of ornithine (ORN) to produce L-citrulline. The chain is Ornithine carbamoyltransferase (argF) from Neisseria mucosa.